Consider the following 41-residue polypeptide: Large ribosomal subunit protein bL36 (41 aa).

Belongs to the bacterial ribosomal protein bL36 family.

This chain is Large ribosomal subunit protein bL36, found in Zymomonas mobilis subsp. mobilis (strain ATCC 31821 / ZM4 / CP4).